A 354-amino-acid polypeptide reads, in one-letter code: MSKKKPLSQGQLRRMRANHEKRLNRDSGDKNTPELQDSSLGPEQSGTVISRFGQHADIETEDGHIVRCNIRRTITSLVTGDKVIVRLAIESQANSGIAGIVEAVHPRHSSLSRPDLYDGVKIIASNIDQILIVSSVLPSFTTQIIDRYLVAAEDTDIPPIIILNKIDLLTPEEAPAIEEALKRYQDIGYPVYKVSSKLGEGLETIKALLKDKVSVFAGQSGVGKSSLVNALLPEAELLVGDVSDNSGLGQHTTTTAKLLHLPSGGDLIDSPGVREFALWHLPAQRVGWCFIEFRDFLGGCKFRDCKHGDDPGCALKAAVDAGKISEDRFNNYHRIIASLDEQRHARQFRAQSDE.

The disordered stretch occupies residues 1-46 (MSKKKPLSQGQLRRMRANHEKRLNRDSGDKNTPELQDSSLGPEQSG). The span at 17-32 (ANHEKRLNRDSGDKNT) shows a compositional bias: basic and acidic residues. The span at 33–46 (PELQDSSLGPEQSG) shows a compositional bias: polar residues. The CP-type G domain occupies 108 to 276 (HSSLSRPDLY…LIDSPGVREF (169 aa)). GTP is bound by residues 164–167 (NKID) and 218–226 (GQSGVGKSS). Residues C300, C305, H307, and C313 each contribute to the Zn(2+) site.

Belongs to the TRAFAC class YlqF/YawG GTPase family. RsgA subfamily. Monomer. Associates with 30S ribosomal subunit, binds 16S rRNA. Requires Zn(2+) as cofactor.

Its subcellular location is the cytoplasm. Functionally, one of several proteins that assist in the late maturation steps of the functional core of the 30S ribosomal subunit. Helps release RbfA from mature subunits. May play a role in the assembly of ribosomal proteins into the subunit. Circularly permuted GTPase that catalyzes slow GTP hydrolysis, GTPase activity is stimulated by the 30S ribosomal subunit. This chain is Small ribosomal subunit biogenesis GTPase RsgA, found in Shewanella oneidensis (strain ATCC 700550 / JCM 31522 / CIP 106686 / LMG 19005 / NCIMB 14063 / MR-1).